Here is a 436-residue protein sequence, read N- to C-terminus: Tol-Pal system protein TolB (436 aa).

The first 28 residues, 1–28, serve as a signal peptide directing secretion; sequence MRSFLKPLLTIAAMALGMTAVIPMPAWA.

The protein belongs to the TolB family. The Tol-Pal system is composed of five core proteins: the inner membrane proteins TolA, TolQ and TolR, the periplasmic protein TolB and the outer membrane protein Pal. They form a network linking the inner and outer membranes and the peptidoglycan layer.

The protein localises to the periplasm. Its function is as follows. Part of the Tol-Pal system, which plays a role in outer membrane invagination during cell division and is important for maintaining outer membrane integrity. The protein is Tol-Pal system protein TolB of Mesorhizobium japonicum (strain LMG 29417 / CECT 9101 / MAFF 303099) (Mesorhizobium loti (strain MAFF 303099)).